The chain runs to 119 residues: Bombesin (119 aa).

Residues 1–29 (MSAIPLNRILPLGFLFHLLIFSFISLSSC) form the signal peptide. Positions 30 to 44 (MEFVEDPNNQGRISL) are excised as a propeptide. M58 is subject to Methionine amide. Residues 62–119 (SLQDTDFEEMESFAKRNVENMRAALLQEQNRAESERELRHAQLVVRNILEQYLKNMQN) constitute a propeptide that is removed on maturation.

This sequence belongs to the bombesin/neuromedin-B/ranatensin family. In terms of tissue distribution, localized to the cutaneous granular glands in the skin and the brain.

It localises to the secreted. Functionally, stimulates smooth muscle contraction. Role in induction of hypothermia, stimulation of DNA replication and release of many gastrointestinal hormones. This chain is Bombesin, found in Bombina orientalis (Oriental fire-bellied toad).